The sequence spans 699 residues: MAREYKIEDYRNFGIMAHIDAGKTTTTERILYYTGKSHKIGEVHDGAATMDWMEQEQERGITITSAATTTYWKGRDGKTRRFNIIDTPGHVDFTIEVERSLRVLDGAIALLDANAGVEPQTETVWRQAEKYNVPRMIFCNKMDKTGADFYRSVEMIKTRLGATAVVMQLPIGAETEFKGVIDLIEMNALIWRDESLGAQWDVVEIPEDMKAKAEEYREKLIETVVEIDEAATEAYLEGNLPDNDQIRALVRRGTIDVKFHPMFCGTAFKNKGVQPLLDAVVDYLPSPLDIPAIKGIDFKTDAEIERHADDSEPLSMLAFKIMNDPFVGSLTFARIYSGKLEKGASVMNTVKDKRERVGRMLQMHSNSREDIEEAFAGDIVALAGLKETTTGDTLCDPLKPVILERMEFPEPVIQIAIEPKTKGDQEKMGLALNRLAAEDPSFRVKTDQESGQTIIAGMGELHLDIIVDRMRREFKVEATVGAPQVAYRETITRLTEKDYTHKKQSGGTGQFARVKIVFEPNPEGDDFKFESKIVGGSVPKEYIPGVQKGIESVLSSGPLAGFPMLGVKATLIDGAFHDVDSSVLAFEIASRACFREAAREAGAQLLEPMMKVEVVTPEDYVGDVIGDLNSRRGQIQGQEARGIAVVINANVPLANMFKYVDNLRSMSQGRAQYTMTFDHYAPVPSNVAQEIQAKYSGQK.

The 281-residue stretch at 8 to 288 (EDYRNFGIMA…AVVDYLPSPL (281 aa)) folds into the tr-type G domain. Residues 17 to 24 (AHIDAGKT), 86 to 90 (DTPGH), and 140 to 143 (NKMD) contribute to the GTP site.

This sequence belongs to the TRAFAC class translation factor GTPase superfamily. Classic translation factor GTPase family. EF-G/EF-2 subfamily.

It is found in the cytoplasm. Functionally, catalyzes the GTP-dependent ribosomal translocation step during translation elongation. During this step, the ribosome changes from the pre-translocational (PRE) to the post-translocational (POST) state as the newly formed A-site-bound peptidyl-tRNA and P-site-bound deacylated tRNA move to the P and E sites, respectively. Catalyzes the coordinated movement of the two tRNA molecules, the mRNA and conformational changes in the ribosome. In Rhizobium rhizogenes (strain K84 / ATCC BAA-868) (Agrobacterium radiobacter), this protein is Elongation factor G.